A 273-amino-acid chain; its full sequence is CUE domain-containing protein 2-A (273 aa).

The disordered stretch occupies residues 92–121; sequence GKENVSPKPTAEVSFMTPTSSSTESSKKIE. The CUE domain maps to 135 to 178; the sequence is DAKNGIDLLLEIFPSCTVSQAQTALSMAKGDLEDAVQIIVDGKV.

Belongs to the CUEDC2 family. In terms of processing, phosphorylated.

It localises to the cytoplasm. The protein resides in the nucleus. May play a role in targeting proteins for ubiquitination and subsequent proteasomal degradation. The chain is CUE domain-containing protein 2-A (cuedc2-a) from Xenopus laevis (African clawed frog).